A 132-amino-acid chain; its full sequence is Agouti-signaling protein (132 aa).

Residues M1–S22 form the signal peptide. N39 is a glycosylation site (N-linked (GlcNAc...) asparagine). The disordered stretch occupies residues I62 to P88. The segment covering S63–M79 has biased composition (basic and acidic residues). Disulfide bonds link C93/C108, C100/C114, C107/C125, C111/C132, and C116/C123. One can recognise an Agouti domain in the interval C93–C132.

It is found in the secreted. Functionally, involved in the regulation of melanogenesis. The binding of ASP to MC1R precludes alpha-MSH initiated signaling and thus blocks production of cAMP, leading to a down-regulation of eumelanogenesis (brown/black pigment) and thus increasing synthesis of pheomelanin (yellow/red pigment). The sequence is that of Agouti-signaling protein (ASIP) from Semnopithecus entellus (Northern plains gray langur).